We begin with the raw amino-acid sequence, 157 residues long: ATP synthase subunit b' (157 aa).

A helical membrane pass occupies residues Ala-22–Phe-42.

The protein belongs to the ATPase B chain family. As to quaternary structure, F-type ATPases have 2 components, F(1) - the catalytic core - and F(0) - the membrane proton channel. F(1) has five subunits: alpha(3), beta(3), gamma(1), delta(1), epsilon(1). F(0) has four main subunits: a(1), b(1), b'(1) and c(10-14). The alpha and beta chains form an alternating ring which encloses part of the gamma chain. F(1) is attached to F(0) by a central stalk formed by the gamma and epsilon chains, while a peripheral stalk is formed by the delta, b and b' chains.

The protein resides in the cellular thylakoid membrane. Its function is as follows. F(1)F(0) ATP synthase produces ATP from ADP in the presence of a proton or sodium gradient. F-type ATPases consist of two structural domains, F(1) containing the extramembraneous catalytic core and F(0) containing the membrane proton channel, linked together by a central stalk and a peripheral stalk. During catalysis, ATP synthesis in the catalytic domain of F(1) is coupled via a rotary mechanism of the central stalk subunits to proton translocation. In terms of biological role, component of the F(0) channel, it forms part of the peripheral stalk, linking F(1) to F(0). The b'-subunit is a diverged and duplicated form of b found in plants and photosynthetic bacteria. This Synechococcus sp. (strain JA-3-3Ab) (Cyanobacteria bacterium Yellowstone A-Prime) protein is ATP synthase subunit b'.